Reading from the N-terminus, the 521-residue chain is Cytochrome P450 monooxygenase ABA2 (521 aa).

A helical membrane pass occupies residues 15–35 (AGHLGMAVTFTILVAFTIHVL). N-linked (GlcNAc...) asparagine glycosylation occurs at N366. C458 provides a ligand contact to heme.

This sequence belongs to the cytochrome P450 family. Heme serves as cofactor.

It is found in the membrane. It participates in hormone biosynthesis. Its function is as follows. Cytochrome P450 monooxygenase involved in the biosynthesis of abscisic acid (ABA), a phytohormone that acts antagonistically toward salicylic acid (SA), jasmonic acid (JA) and ethylene (ETH) signaling, to impede plant defense responses. During pathogen-host interaction, ABA plays a dual role in disease severity by increasing plant susceptibility and accelerating pathogenesis in the fungus itself. The first step of the pathway catalyzes the reaction from farnesyl diphosphate to alpha-ionylideneethane performed by the alpha-ionylideneethane synthase ABA3 via a three-step reaction mechanism involving 2 neutral intermediates, beta-farnesene and allofarnesene. The cytochrome P450 monooxygenase ABA1 might then be involved in the conversion of alpha-ionylideneethane to alpha-ionylideneacetic acid. Alpha-ionylideneacetic acid is further converted to abscisic acid in 2 steps involving the cytochrome P450 monooxygenase ABA2 and the short-chain dehydrogenase/reductase ABA4, via the intermediates 1'-deoxy-ABA or 1',4'-trans-diol-ABA, depending on the order of action of these 2 enzymes. ABA2 is responsible for the hydroxylation of carbon atom C-1' and ABA4 might be involved in the oxidation of the C-4' carbon atom. The sequence is that of Cytochrome P450 monooxygenase ABA2 from Pyricularia oryzae (strain 70-15 / ATCC MYA-4617 / FGSC 8958) (Rice blast fungus).